The following is a 501-amino-acid chain: Aspartate--tRNA ligase, cytoplasmic (501 aa).

The residue at position 52 (T52) is a Phosphothreonine. K74 carries the N6-acetyllysine modification. Position 229 (E229) interacts with L-aspartate. Position 249 is a phosphoserine (S249). Residues 251–254 are aspartate; that stretch reads QLYK. Residue R273 participates in L-aspartate binding. ATP-binding positions include 273-275 and 281-283; these read RAE and RHL. The residue at position 374 (K374) is an N6-acetyllysine. The tract at residues 411 to 415 is binding site for the 3'-end of tRNA; that stretch reads KQSNS. E424 serves as a coordination point for ATP. 2 residues coordinate L-aspartate: S427 and R431. ATP is bound at residue 472–475; the sequence is GLER. T500 bears the Phosphothreonine; by PKA mark.

It belongs to the class-II aminoacyl-tRNA synthetase family. Type 2 subfamily. As to quaternary structure, homodimer. Part of a multisubunit complex that groups tRNA ligases for Arg (RARS1), Asp (DARS1), Gln (QARS1), Ile (IARS1), Leu (LARS1), Lys (KARS1), Met (MARS1) the bifunctional ligase for Glu and Pro (EPRS1) and the auxiliary subunits AIMP1/p43, AIMP2/p38 and EEF1E1/p18.

It localises to the cytoplasm. It catalyses the reaction tRNA(Asp) + L-aspartate + ATP = L-aspartyl-tRNA(Asp) + AMP + diphosphate. Its function is as follows. Catalyzes the specific attachment of an amino acid to its cognate tRNA in a 2 step reaction: the amino acid (AA) is first activated by ATP to form AA-AMP and then transferred to the acceptor end of the tRNA. The protein is Aspartate--tRNA ligase, cytoplasmic (DARS1) of Bos taurus (Bovine).